Reading from the N-terminus, the 332-residue chain is 5-dehydro-2-deoxygluconokinase (332 aa).

It belongs to the carbohydrate kinase PfkB family.

The catalysed reaction is 5-dehydro-2-deoxy-D-gluconate + ATP = 6-phospho-5-dehydro-2-deoxy-D-gluconate + ADP + H(+). It participates in polyol metabolism; myo-inositol degradation into acetyl-CoA; acetyl-CoA from myo-inositol: step 5/7. In terms of biological role, catalyzes the phosphorylation of 5-dehydro-2-deoxy-D-gluconate (2-deoxy-5-keto-D-gluconate or DKG) to 6-phospho-5-dehydro-2-deoxy-D-gluconate (DKGP). The sequence is that of 5-dehydro-2-deoxygluconokinase from Bacillus thuringiensis subsp. konkukian (strain 97-27).